Here is a 3163-residue protein sequence, read N- to C-terminus: Genome polyprotein (3163 aa).

One can recognise a Peptidase S30 domain in the interval 219-362 (KMSDQGVDML…KTMSLKIVHF (144 aa)). Active-site for P1 proteinase activity residues include His-270, Asp-279, and Ser-313. The Involved in interaction with stylet and aphid transmission motif lies at 414 to 417 (KITC). The short motif at 672 to 674 (PTK) is the Involved in virions binding and aphid transmission element. The region spanning 698–820 (MYIAKEGYCY…ESSLKHYRVG (123 aa)) is the Peptidase C6 domain. Active-site for helper component proteinase activity residues include Cys-706 and His-779. The 153-residue stretch at 1300-1452 (KIAHESDKDI…TQYPVSISTE (153 aa)) folds into the Helicase ATP-binding domain. 1313-1320 (GAVGSGKS) is a binding site for ATP. The short motif at 1402–1405 (DECH) is the DEAH box element. Residues 1471–1630 (DVISKGDNIL…GLPVITNNVS (160 aa)) enclose the Helicase C-terminal domain. Residues 1871 to 1888 (STNEMSKFLQLKGKWNKT) are Cytoplasmic-facing. The chain crosses the membrane as a helical span at residues 1889 to 1909 (LITRDVLVICGVLGGGVWMVV). The Lumenal segment spans residues 1910–1923 (QHFRSKVSEPVTHE). Residues 1964–1971 (KKGKSKGR) carry the Nuclear localization signal motif. Residues 1983–2017 (INMYGFDPEDFSAVRFVDPLTGATLDDNPFTDITL) form a binding to host eIF(iso)4E region. Tyr-1986 carries the O-(5'-phospho-RNA)-tyrosine modification. In terms of domain architecture, Peptidase C4 spans 2116–2334 (SNSMFRGLRD…ISWGSLNIQA (219 aa)). Residues His-2161, Asp-2196, and Cys-2266 each act as for nuclear inclusion protein A activity in the active site. Positions 2600 to 2724 (WVYCDADGSQ…SVHPEYEYIL (125 aa)) constitute a RdRp catalytic domain. Residues 2883–2934 (DLTEEQKQAEKEKKEREKAEKERERQKQLAFKKGKDVAQEEGKRDKEVNAGT) are disordered. Residues 2886–2930 (EEQKQAEKEKKEREKAEKERERQKQLAFKKGKDVAQEEGKRDKEV) show a composition bias toward basic and acidic residues.

This sequence belongs to the potyviridae genome polyprotein family. As to quaternary structure, interacts with host eIF4E protein (via cap-binding region); this interaction mediates the translation of the VPg-viral RNA conjugates. Part of a complex that comprises VPg, RNA, host EIF4E and EIF4G; this interaction mediates the translation of the VPg-viral RNA conjugates. In terms of assembly, interacts, via N-terminal region, with host Sec24a protein in COPII-coated vesicles. This binding triggers the formation of host endoplasmic reticulum (ER)-derived viral vesicles involved in cell-to-cell viral movement. Post-translationally, VPg is uridylylated by the polymerase and is covalently attached to the 5'-end of the genomic RNA. This uridylylated form acts as a nucleotide-peptide primer for the polymerase. Potyviral RNA is expressed as two polyproteins which undergo post-translational proteolytic processing. Genome polyprotein is processed by NIa-pro, P1 and HC-pro proteinases resulting in the production of at least ten individual proteins. P3N-PIPO polyprotein is cleaved by P1 and HC-pro proteinases resulting in the production of three individual proteins. The P1 proteinase and the HC-pro cleave only their respective C-termini autocatalytically. 6K1 is essential for proper proteolytic separation of P3 from CI.

It localises to the host cytoplasm. Its subcellular location is the host nucleus. The protein localises to the host cytoplasmic vesicle. The protein resides in the host membrane. It is found in the virion. The catalysed reaction is RNA(n) + a ribonucleoside 5'-triphosphate = RNA(n+1) + diphosphate. The enzyme catalyses Hydrolyzes glutaminyl bonds, and activity is further restricted by preferences for the amino acids in P6 - P1' that vary with the species of potyvirus, e.g. Glu-Xaa-Xaa-Tyr-Xaa-Gln-|-(Ser or Gly) for the enzyme from tobacco etch virus. The natural substrate is the viral polyprotein, but other proteins and oligopeptides containing the appropriate consensus sequence are also cleaved.. It carries out the reaction Hydrolyzes a Gly-|-Gly bond at its own C-terminus, commonly in the sequence -Tyr-Xaa-Val-Gly-|-Gly, in the processing of the potyviral polyprotein.. Cysteine protease that cleaves a Gly-Gly dipeptide at its own C-terminus. Required for aphid transmission and also has proteolytic activity. Interacts with virions and aphid stylets. Acts as a suppressor of RNA-mediated gene silencing, also known as post-transcriptional gene silencing (PTGS), a mechanism of plant viral defense that limits the accumulation of viral RNAs. May have RNA-binding activity. In terms of biological role, has helicase activity. It may be involved in replication. Functionally, indispensable for virus replication. Its function is as follows. Responsible for the formation of peripheral motile host endoplasmic reticulum (ER)-derived viral vesicles called 'viral factories', seat of the viral RNA (vRNA) replication and carrying vRNA to plasmodesmata for delivery into adjacent non-infected cells; this process relies on host Sec24a-binding. Mediates the cap-independent, EIF4E-dependent translation of viral genomic RNAs. Binds to the cap-binding site of host EIF4E and thus interferes with the host EIF4E-dependent mRNA export and translation. VPg-RNA directly binds EIF4E and is a template for transcription. Also forms trimeric complexes with EIF4E-EIF4G, which are templates for translation. In terms of biological role, has RNA-binding and proteolytic activities. Functionally, RNA-dependent RNA polymerase that ensures transcription and replication of viral RNA (vRNA). Its function is as follows. Involved in aphid transmission, cell-to-cell and systemis movement, encapsidation of the viral RNA and in the regulation of viral RNA amplification. The chain is Genome polyprotein from Brassica (TuMV).